Consider the following 240-residue polypeptide: Uridylate kinase (240 aa).

13 to 16 (KASG) lines the ATP pocket. Residues 21–26 (GSQGFG) are involved in allosteric activation by GTP. Gly-55 is a binding site for UMP. ATP contacts are provided by Gly-56 and Arg-60. Residues Asp-75 and 136-143 (TGNPFFTT) contribute to the UMP site. Thr-163, Gln-164, Tyr-169, and Asp-172 together coordinate ATP.

It belongs to the UMP kinase family. Homohexamer.

The protein localises to the cytoplasm. It carries out the reaction UMP + ATP = UDP + ADP. Its pathway is pyrimidine metabolism; CTP biosynthesis via de novo pathway; UDP from UMP (UMPK route): step 1/1. Its activity is regulated as follows. Allosterically activated by GTP. Inhibited by UTP. Catalyzes the reversible phosphorylation of UMP to UDP. This is Uridylate kinase from Brucella suis biovar 1 (strain 1330).